A 69-amino-acid chain; its full sequence is Cytoinsectotoxin-2a (69 aa).

This sequence belongs to the cationic peptide 06 (cytoinsectotoxin) family. In terms of tissue distribution, expressed by the venom gland.

It localises to the secreted. Insecticidal and antimicrobial peptide. Has insecticidal activity against larvae of flesh fly S.carnaria. Has antibacterial activity against Gram-positive bacterium B.subtilis B-501 (MIC=1.25 uM) and Gram-negative bacterium E.coli DH5alpha (MIC=2.5 uM). In Lachesana tarabaevi (Spider), this protein is Cytoinsectotoxin-2a.